The following is a 131-amino-acid chain: Agouti-signaling protein (131 aa).

The signal sequence occupies residues 1–22 (MDVTRLLLATLVGFLCFLTVHS). Residue Asn39 is glycosylated (N-linked (GlcNAc...) asparagine). The tract at residues 58–96 (KSKKISRKEAEKRKRSSKKKASIKKVARPPPPSPCVATR) is disordered. Residues 70-84 (RKRSSKKKASIKKVA) are compositionally biased toward basic residues. 5 disulfide bridges follow: Cys92–Cys107, Cys99–Cys113, Cys106–Cys124, Cys110–Cys131, and Cys115–Cys122. Positions 92–131 (CVATRDSCKPPAPACCNPCASCQCRFFGSACTCRVLNPNC) constitute an Agouti domain.

It localises to the secreted. Its function is as follows. Involved in the regulation of melanogenesis. The binding of ASP to MC1R precludes alpha-MSH initiated signaling and thus blocks production of cAMP, leading to a down-regulation of eumelanogenesis (brown/black pigment) and thus increasing synthesis of pheomelanin (yellow/red pigment). The sequence is that of Agouti-signaling protein from Rattus norvegicus (Rat).